The sequence spans 371 residues: Chaperone protein DnaJ (371 aa).

In terms of domain architecture, J spans 5 to 70 (CYYEILNVSK…SKRSRYDQFG (66 aa)). The segment at 127 to 204 (GVEKEITIPR…CYGNGKVKKQ (78 aa)) adopts a CR-type zinc-finger fold. Zn(2+) is bound by residues cysteine 140, cysteine 143, cysteine 156, cysteine 159, cysteine 178, cysteine 181, cysteine 192, and cysteine 195. 4 CXXCXGXG motif repeats span residues 140 to 147 (CDSCDGTG), 156 to 163 (CHACHGQG), 178 to 185 (CPVCNGTG), and 192 to 199 (CDACYGNG).

This sequence belongs to the DnaJ family. As to quaternary structure, homodimer. Zn(2+) is required as a cofactor.

Its subcellular location is the cytoplasm. Participates actively in the response to hyperosmotic and heat shock by preventing the aggregation of stress-denatured proteins and by disaggregating proteins, also in an autonomous, DnaK-independent fashion. Unfolded proteins bind initially to DnaJ; upon interaction with the DnaJ-bound protein, DnaK hydrolyzes its bound ATP, resulting in the formation of a stable complex. GrpE releases ADP from DnaK; ATP binding to DnaK triggers the release of the substrate protein, thus completing the reaction cycle. Several rounds of ATP-dependent interactions between DnaJ, DnaK and GrpE are required for fully efficient folding. Also involved, together with DnaK and GrpE, in the DNA replication of plasmids through activation of initiation proteins. The polypeptide is Chaperone protein DnaJ (Francisella tularensis subsp. tularensis (strain WY96-3418)).